The sequence spans 307 residues: UDP-3-O-acyl-N-acetylglucosamine deacetylase (307 aa).

Zn(2+)-binding residues include His78, His241, and Asp245. His268 serves as the catalytic Proton donor.

This sequence belongs to the LpxC family. Zn(2+) serves as cofactor.

The enzyme catalyses a UDP-3-O-[(3R)-3-hydroxyacyl]-N-acetyl-alpha-D-glucosamine + H2O = a UDP-3-O-[(3R)-3-hydroxyacyl]-alpha-D-glucosamine + acetate. The protein operates within glycolipid biosynthesis; lipid IV(A) biosynthesis; lipid IV(A) from (3R)-3-hydroxytetradecanoyl-[acyl-carrier-protein] and UDP-N-acetyl-alpha-D-glucosamine: step 2/6. In terms of biological role, catalyzes the hydrolysis of UDP-3-O-myristoyl-N-acetylglucosamine to form UDP-3-O-myristoylglucosamine and acetate, the committed step in lipid A biosynthesis. This chain is UDP-3-O-acyl-N-acetylglucosamine deacetylase, found in Bordetella avium (strain 197N).